The primary structure comprises 302 residues: Deoxyhypusine hydroxylase (302 aa).

Met-1 carries the post-translational modification N-acetylmethionine. 5 HEAT-like PBS-type repeats span residues 54–80, 87–113, 175–201, 206–232, and 239–265; these read LKHELAYCLGQMRDARAIPVLADVLQD, VRHEAGEALGAIGNPEVLGLLKQYSTD, ERYRAMFALRNVGGKEAALALAEGLQC, FRHEVGYVLGQLQHEAAVPGLAATLAR, and VRHECAEALGAIARPACLAALREHIED. Fe cation is bound by residues His-56, His-89, and Glu-90. Positions 208, 241, and 242 each coordinate Fe cation.

Belongs to the deoxyhypusine hydroxylase family. The cofactor is Fe(2+).

The enzyme catalyses [eIF5A protein]-deoxyhypusine + AH2 + O2 = [eIF5A protein]-hypusine + A + H2O. It functions in the pathway protein modification; eIF5A hypusination. Its function is as follows. Catalyzes the hydroxylation of the N(6)-(4-aminobutyl)-L-lysine intermediate produced by deoxyhypusine synthase/DHPS on a critical lysine of the eukaryotic translation initiation factor 5A/eIF-5A. This is the second step of the post-translational modification of that lysine into an unusual amino acid residue named hypusine. Hypusination is unique to mature eIF-5A factor and is essential for its function. This Mus musculus (Mouse) protein is Deoxyhypusine hydroxylase.